A 102-amino-acid polypeptide reads, in one-letter code: Monothiol glutaredoxin-S9 (102 aa).

A Glutaredoxin domain is found at 1-101 (MDKVVRMSSE…PLVKPFQANL (101 aa)). Cysteine 21 is a [2Fe-2S] cluster binding site.

The protein belongs to the glutaredoxin family. CC-type subfamily.

It localises to the cytoplasm. Functionally, may only reduce GSH-thiol disulfides, but not protein disulfides. This chain is Monothiol glutaredoxin-S9 (GRXS9), found in Arabidopsis thaliana (Mouse-ear cress).